We begin with the raw amino-acid sequence, 3124 residues long: Collagen alpha-1(XII) chain (3124 aa).

Positions 1–23 (MRTALCSAVAALCAAALLSSIEA) are cleaved as a signal peptide. One can recognise a Fibronectin type-III 1 domain in the interval 27–117 (PPSDLNFTII…GQLTIQTGGP (91 aa)). N-linked (GlcNAc...) asparagine glycosylation is present at asparagine 32. The VWFA 1 domain maps to 139–311 (DLVFLVDGSW…DGIVDIQNEI (173 aa)). O-linked (Xyl...) (chondroitin sulfate) serine glycosylation occurs at serine 328. The Fibronectin type-III 2 domain occupies 335 to 424 (PASNLVATQI…ITIMEKTQQV (90 aa)). In terms of domain architecture, VWFA 2 spans 439–615 (DVVFLVDGSY…RISFELTQSV (177 aa)). 6 consecutive Fibronectin type-III domains span residues 633-722 (PAKN…LEVK), 724-815 (APRN…VRGN), 816-906 (PRNL…LEER), 908-998 (SPRN…VSQS), 999-1087 (ARTV…ASPF), and 1089-1179 (PPRN…TLSD). O-linked (Xyl...) (chondroitin sulfate) serine glycans are attached at residues serine 797, serine 890, and serine 981. N-linked (GlcNAc...) asparagine glycosylation is found at asparagine 1006, asparagine 1032, and asparagine 1044. The tract at residues 1075–1100 (KSRKAEGTTASPFKPPRNLRTSDSTM) is disordered. Positions 1199-1371 (DIVLLVDGSW…SFLASIGEDV (173 aa)) constitute a VWFA 3 domain. 10 Fibronectin type-III domains span residues 1387–1476 (PPSN…YPLS), 1477–1568 (SVRN…LPLP), 1569–1659 (GPRG…VPSP), 1660–1756 (VNLR…TPAP), 1759–1853 (GPRN…TVKN), 1854–1939 (MLVY…LERG), 1940–2030 (TPRN…LPRS), 2031–2121 (GPRN…VGLL), 2122–2210 (PPQN…LYLN), and 2211–2299 (VTDL…LKPT). Residue asparagine 1512 is glycosylated (N-linked (GlcNAc...) asparagine). The N-linked (GlcNAc...) asparagine glycan is linked to asparagine 1767. 2 N-linked (GlcNAc...) asparagine glycosylation sites follow: asparagine 2210 and asparagine 2273. One can recognise a VWFA 4 domain in the interval 2327-2500 (DIVFLTDASW…DAFEKIQDNL (174 aa)). Residues 2455–2750 (SGFSVFVVGV…NACTCTQDSV (296 aa)) are nonhelical region (NC3). A Laminin G-like domain is found at 2524–2716 (GFKMLESYNL…IQNFDIVCSP (193 aa)). N-linked (GlcNAc...) asparagine glycans are attached at residues asparagine 2532 and asparagine 2683. Disordered stretches follow at residues 2749-2900 (SVGP…GDRG) and 2935-3080 (PNDY…EGEP). 3 consecutive Collagen-like domains span residues 2751–2802 (GPPG…GPNG), 2807–2858 (GEPG…GPRG), and 2859–2900 (PPGP…GDRG). Positions 2751 to 2902 (GPPGPPGPPG…KGEKGDRGDI (152 aa)) are triple-helical region (COL2) with 1 imperfection. 2 stretches are compositionally biased toward pro residues: residues 2752 to 2761 (PPGPPGPPGG) and 2788 to 2798 (PPGPQGPPGPQ). A compositionally biased stretch (low complexity) spans 2821–2830 (PGLPGRSGTP). Residues 2832–2841 (LPGPPGPVGP) are compositionally biased toward pro residues. Low complexity-rich tracts occupy residues 2842–2854 (PGER…DGPT) and 2865–2878 (APGV…SGKP). The Cell attachment site motif lies at 2899–2901 (RGD). A nonhelical region (NC2) region spans residues 2903–2945 (ASQNMMRAVARQVCEQLINGQMSRFNQMLNQIPNDYYSNRNQP). The segment covering 2935 to 2944 (PNDYYSNRNQ) has biased composition (polar residues). Residues 2945–2954 (PGPPGPPGPP) show a composition bias toward pro residues. The Collagen-like 4 domain occupies 2945–2994 (PGPPGPPGPPGAAGTRGEPGPGGRPGFPGPPGVQGPPGERGMPGEKGERG). The triple-helical region (COL1) with 2 imperfections stretch occupies residues 2946 to 3048 (GPPGPPGPPG…RGPPGPPGYC (103 aa)). Over residues 2961–2970 (GEPGPGGRPG) the composition is skewed to gly residues. Over residues 3010-3024 (QGESRTGPPGSTGSR) the composition is skewed to low complexity. Positions 3049-3124 (DSSQCASIPY…SLSRKAKRKP (76 aa)) are nonhelical region (NC1).

The protein belongs to the fibril-associated collagens with interrupted helices (FACIT) family. Trimer of identical chains each containing 190 kDa of non-triple-helical sequences. The triple-helical tail is stabilized by disulfide bonds at each end. Post-translationally, prolines at the third position of the tripeptide repeating unit (G-X-Y) are hydroxylated in some or all of the chains. In terms of processing, O-glycosylated; glycosaminoglycan of chondroitin-sulfate type. Type XII collagen is present in tendons, ligaments, perichondrium, and periosteum, all dense connective tissues containing type I collagen.

Its subcellular location is the secreted. The protein localises to the extracellular space. It is found in the extracellular matrix. Its function is as follows. Type XII collagen interacts with type I collagen-containing fibrils, the COL1 domain could be associated with the surface of the fibrils, and the COL2 and NC3 domains may be localized in the perifibrillar matrix. This Gallus gallus (Chicken) protein is Collagen alpha-1(XII) chain (COL12A1).